Consider the following 360-residue polypeptide: MAPRRERVSTLPRLQLLVLLLLPLMLVPQPIAGHGGKYSREKNEPEMAAKRESGEEFRMEKLNQLWEKAKRLHLSPVRLAELHSDLKIQERDELNWKKLKVEGLDKDGEKEAKLIHNLNVILARYGLDGRKDAQMVHSNALNEDTQDELGDPRLEKLWHKAKTSGKFSSEELDKLWREFLHYKEKIQEYNVLLDTLSRAEEGYENLLSPSDMAHIKSDTLISKHSELKDRLRSINQGLDRLRKVSHQGYGSTTEFEEPRVIDLWDLAQSANFTEKELESFREELKHFEAKIEKHNHYQKQLEISHQKLKHVESIGDPEHISRNKEKYVLLEEKTKELGYKVKKHLQDLSSRVSRARHNEL.

A signal peptide spans 1–28 (MAPRRERVSTLPRLQLLVLLLLPLMLVP). S53 and S138 each carry phosphoserine. The stretch at 184–302 (EKIQEYNVLL…KHNHYQKQLE (119 aa)) forms a coiled coil. The segment at 240–356 (RLRKVSHQGY…DLSSRVSRAR (117 aa)) is LDL receptor binding. Residue N271 is glycosylated (N-linked (GlcNAc...) asparagine). Residues 357 to 360 (HNEL) carry the Prevents secretion from ER motif.

The protein belongs to the alpha-2-MRAP family. As to quaternary structure, interacts with the LRP1/alpha-2-macroglobulin receptor heavy and light chains; the interaction is transient and coincides with a reduction of ligand binding by the receptor. Interacts with LRP2/glycoprotein 330. Interacts with LRP1B; binding is followed by internalization and degradation. Interacts with LDLR. Interacts with SORL1. Interacts with LRP1; this interaction is followed by rapid internalization. In terms of processing, N-glycosylated. As to expression, highly expressed in PYS-2 parietal endoderm cells and in the kidney. The RNA level increased about 10-fold during differentiation of F9 embryonal carcinoma cells to parietal endoderm cells.

Its subcellular location is the rough endoplasmic reticulum lumen. It localises to the endoplasmic reticulum-Golgi intermediate compartment lumen. The protein localises to the golgi apparatus. It is found in the cis-Golgi network. The protein resides in the golgi apparatus lumen. Its subcellular location is the endosome lumen. It localises to the cell surface. Its function is as follows. Molecular chaperone for LDL receptor-related proteins that may regulate their ligand binding activity along the secretory pathway. This Mus musculus (Mouse) protein is Alpha-2-macroglobulin receptor-associated protein (Lrpap1).